The primary structure comprises 97 residues: Large ribosomal subunit protein bL28 (97 aa).

Belongs to the bacterial ribosomal protein bL28 family.

The chain is Large ribosomal subunit protein bL28 from Sphingopyxis alaskensis (strain DSM 13593 / LMG 18877 / RB2256) (Sphingomonas alaskensis).